Reading from the N-terminus, the 230-residue chain is Cytidylate kinase (230 aa).

12–20 (GPSGAGKGT) contacts ATP.

This sequence belongs to the cytidylate kinase family. Type 1 subfamily.

It localises to the cytoplasm. It carries out the reaction CMP + ATP = CDP + ADP. It catalyses the reaction dCMP + ATP = dCDP + ADP. The chain is Cytidylate kinase from Yersinia enterocolitica serotype O:8 / biotype 1B (strain NCTC 13174 / 8081).